Here is a 75-residue protein sequence, read N- to C-terminus: Putative DNA-directed RNA polymerase subunit omega (75 aa).

It belongs to the RNA polymerase subunit omega family.

It localises to the plastid. Its subcellular location is the chloroplast. The enzyme catalyses RNA(n) + a ribonucleoside 5'-triphosphate = RNA(n+1) + diphosphate. May be involved in RNA polymerase activity. The chain is Putative DNA-directed RNA polymerase subunit omega from Pyropia yezoensis (Susabi-nori).